Reading from the N-terminus, the 1427-residue chain is DNA-directed RNA polymerase subunit beta' (1427 aa).

Cys66, Cys68, Cys81, and Cys84 together coordinate Zn(2+). Positions 472, 474, and 476 each coordinate Mg(2+). 4 residues coordinate Zn(2+): Cys815, Cys889, Cys896, and Cys899.

This sequence belongs to the RNA polymerase beta' chain family. As to quaternary structure, the RNAP catalytic core consists of 2 alpha, 1 beta, 1 beta' and 1 omega subunit. When a sigma factor is associated with the core the holoenzyme is formed, which can initiate transcription. Requires Mg(2+) as cofactor. It depends on Zn(2+) as a cofactor.

It catalyses the reaction RNA(n) + a ribonucleoside 5'-triphosphate = RNA(n+1) + diphosphate. In terms of biological role, DNA-dependent RNA polymerase catalyzes the transcription of DNA into RNA using the four ribonucleoside triphosphates as substrates. The polypeptide is DNA-directed RNA polymerase subunit beta' (Bacteroides fragilis (strain ATCC 25285 / DSM 2151 / CCUG 4856 / JCM 11019 / LMG 10263 / NCTC 9343 / Onslow / VPI 2553 / EN-2)).